We begin with the raw amino-acid sequence, 503 residues long: MEEFQGYLELYRSQQHDFLYPLIFREYIYALAHDRGLNRSVLLDNVGYDKKSSLLIIKRLISRMYQQNHFLISVNDSNQNKFFGYNKNLYSQIISEGFAVIVEIPFSLRLVSSLKETETVKSYNLRSIHSIFPFFEDKFPHLNYASDVLIPYPIHLEILVQTLRYCVKDPSSLHLLRLFLHEYYNWNTLITPKKSIFAKSNQRLFLLLYNSYVCEYESILLFLRNQSNHLRLTSSGILFERIRFYEKIKYPVEEVFANDFPATLWFFKDPFIQYVRYQGKSILASKDTPLLMNKWKYYLVHFWQCHFYVWSQPGRIHINQLSKHSFDFLGYLSSIRPNISVVRSQLLENSFLMDNAMKKLDTLFPIIPMIGSLAKVKFCNTSGHPISKSSWADSSDSDIIDRFVRIGGNLSHYYSGSSKKKSLYRIKYILRLSCVKTLARKHKSTVRTFLKRLGPKLLDEFFTEEEQIFSLLFPRTSSTLKRFYRGRIWYLDILCINDLVNHE.

It belongs to the intron maturase 2 family. MatK subfamily.

Its subcellular location is the plastid. The protein localises to the chloroplast. Functionally, usually encoded in the trnK tRNA gene intron. Probably assists in splicing its own and other chloroplast group II introns. In Rosa californica (California wild rose), this protein is Maturase K.